Reading from the N-terminus, the 637-residue chain is 3D-(3,5/4)-trihydroxycyclohexane-1,2-dione hydrolase (637 aa).

A thiamine diphosphate-binding site is contributed by Glu-66. Residues 442–522 form a thiamine pyrophosphate binding region; sequence SLPGDLQRLW…INVLLFDNSG (81 aa). The Mg(2+) site is built by Asp-493 and Asn-520.

This sequence belongs to the TPP enzyme family. It depends on Mg(2+) as a cofactor. Thiamine diphosphate is required as a cofactor.

The catalysed reaction is 3D-3,5/4-trihydroxycyclohexane-1,2-dione + H2O = 5-deoxy-D-glucuronate + H(+). It participates in polyol metabolism; myo-inositol degradation into acetyl-CoA; acetyl-CoA from myo-inositol: step 3/7. Functionally, involved in the cleavage of the C1-C2 bond of 3D-(3,5/4)-trihydroxycyclohexane-1,2-dione (THcHDO) to yield 5-deoxy-glucuronate (5DG). In Bacillus subtilis (strain 168), this protein is 3D-(3,5/4)-trihydroxycyclohexane-1,2-dione hydrolase (iolD).